A 199-amino-acid polypeptide reads, in one-letter code: Acireductone dioxygenase 1 (199 aa).

Fe(2+) is bound by residues H99, H101, E105, and H144. Ni(2+) contacts are provided by H99, H101, E105, and H144.

This sequence belongs to the acireductone dioxygenase (ARD) family. It depends on Fe(2+) as a cofactor. Ni(2+) serves as cofactor.

The protein localises to the cytoplasm. Its subcellular location is the nucleus. It carries out the reaction 1,2-dihydroxy-5-(methylsulfanyl)pent-1-en-3-one + O2 = 4-methylsulfanyl-2-oxobutanoate + formate + 2 H(+). The catalysed reaction is 1,2-dihydroxy-5-(methylsulfanyl)pent-1-en-3-one + O2 = 3-(methylsulfanyl)propanoate + CO + formate + 2 H(+). It functions in the pathway amino-acid biosynthesis; L-methionine biosynthesis via salvage pathway; L-methionine from S-methyl-5-thio-alpha-D-ribose 1-phosphate: step 5/6. Its function is as follows. Catalyzes 2 different reactions between oxygen and the acireductone 1,2-dihydroxy-3-keto-5-methylthiopentene (DHK-MTPene) depending upon the metal bound in the active site. Fe-containing acireductone dioxygenase (Fe-ARD) produces formate and 2-keto-4-methylthiobutyrate (KMTB), the alpha-ketoacid precursor of methionine in the methionine recycle pathway. Ni-containing acireductone dioxygenase (Ni-ARD) produces methylthiopropionate, carbon monoxide and formate, and does not lie on the methionine recycle pathway. The chain is Acireductone dioxygenase 1 (ARD1) from Arabidopsis thaliana (Mouse-ear cress).